A 430-amino-acid chain; its full sequence is Serine/threonine-protein kinase Sgk1 (430 aa).

Residues 1–60 (MTVKTEAARSTLTYSRMRGMVAILIAFMKQRRMGLNDFIQKLANNSYACKHPEVQSYLKI) are necessary for localization to the mitochondria. Positions 66-92 (PELMNANPSPPPSPSQQINLGPSSNPH) are disordered. Phosphoserine is present on S74. At S78 the chain carries Phosphoserine; by MAPK7. The segment covering 81 to 91 (QQINLGPSSNP) has biased composition (polar residues). The 257-residue stretch at 98 to 354 (FHFLKVIGKG…FMEIKSHIFF (257 aa)) folds into the Protein kinase domain. Residues 104 to 112 (IGKGSFGKV) and K127 each bind ATP. The Nuclear localization signal signature appears at 131–141 (KKAILKKKEEK). D222 acts as the Proton acceptor in catalysis. T256 is subject to Phosphothreonine; by PDPK1. The AGC-kinase C-terminal domain maps to 355 to 430 (SLINWDDLIN…SYAPPMDSFL (76 aa)). At T368 the chain carries Phosphothreonine; by PKA. 3 positions are modified to phosphoserine: S396, S400, and S421.

It belongs to the protein kinase superfamily. AGC Ser/Thr protein kinase family. As to quaternary structure, homodimer; disulfide-linked. Forms a trimeric complex with FBXW7 and NOTCH1. Interacts with MAPK3/ERK1, MAPK1/ERK2, MAP2K1/MEK1, MAP2K2/MEK2, NEDD4, NEDD4L, MAPK7, CREB1, SLC9A3R2/NHERF2 and KCNJ1/ROMK1. Associates with the mammalian target of rapamycin complex 2 (mTORC2) via an interaction with MAPKAP1/SIN1. Interacts with MAPT/TAU. Post-translationally, regulated by phosphorylation. Activated by phosphorylation on Ser-421 by mTORC2, transforming it into a substrate for PDPK1 which phosphorylates it on Thr-256. Phosphorylation on Ser-396 and Ser-400 are also essential for its activity. Phosphorylation on Ser-78 by MAPK7 is required for growth factor-induced cell cycle progression. Ubiquitinated by NEDD4L; which promotes proteasomal degradation. Ubiquitinated by SYVN1 at the endoplasmic reticulum; which promotes rapid proteasomal degradation and maintains a high turnover rate in resting cells. Expressed in most tissues with highest levels in the ovary, thymus and lung. In the kidney, expressed within glomeruli of the cortex, at low levels in outer medulla and moderate levels in inner medulla and papilla.

It localises to the cytoplasm. The protein localises to the nucleus. The protein resides in the endoplasmic reticulum membrane. Its subcellular location is the cell membrane. It is found in the mitochondrion. The enzyme catalyses L-seryl-[protein] + ATP = O-phospho-L-seryl-[protein] + ADP + H(+). The catalysed reaction is L-threonyl-[protein] + ATP = O-phospho-L-threonyl-[protein] + ADP + H(+). Two specific sites, one in the kinase domain (Thr-256) and the other in the C-terminal regulatory region (Ser-421), need to be phosphorylated for its full activation. Phosphorylation at Ser-396 and Ser-400 are also essential for its activity. Activated by WNK1, WNK2, WNK3 and WNK4. Serine/threonine-protein kinase which is involved in the regulation of a wide variety of ion channels, membrane transporters, cellular enzymes, transcription factors, neuronal excitability, cell growth, proliferation, survival, migration and apoptosis. Plays an important role in cellular stress response. Contributes to regulation of renal Na(+) retention, renal K(+) elimination, salt appetite, gastric acid secretion, intestinal Na(+)/H(+) exchange and nutrient transport, insulin-dependent salt sensitivity of blood pressure, salt sensitivity of peripheral glucose uptake, cardiac repolarization and memory consolidation. Up-regulates Na(+) channels: SCNN1A/ENAC, SCN5A and ASIC1/ACCN2, K(+) channels: KCNJ1/ROMK1, KCNA1-5, KCNQ1-5 and KCNE1, epithelial Ca(2+) channels: TRPV5 and TRPV6, chloride channels: BSND, CLCN2 and CFTR, glutamate transporters: SLC1A3/EAAT1, SLC1A2 /EAAT2, SLC1A1/EAAT3, SLC1A6/EAAT4 and SLC1A7/EAAT5, amino acid transporters: SLC1A5/ASCT2, SLC38A1/SN1 and SLC6A19, creatine transporter: SLC6A8, Na(+)/dicarboxylate cotransporter: SLC13A2/NADC1, Na(+)-dependent phosphate cotransporter: SLC34A2/NAPI-2B, glutamate receptor: GRIK2/GLUR6. Up-regulates carriers: SLC9A3/NHE3, SLC12A1/NKCC2, SLC12A3/NCC, SLC5A3/SMIT, SLC2A1/GLUT1, SLC5A1/SGLT1 and SLC15A2/PEPT2. Regulates enzymes: GSK3A/B, PMM2 and Na(+)/K(+) ATPase, and transcription factors: CTNNB1 and nuclear factor NF-kappa-B. Stimulates sodium transport into epithelial cells by enhancing the stability and expression of SCNN1A/ENAC. This is achieved by phosphorylating the NEDD4L ubiquitin E3 ligase, promoting its interaction with 14-3-3 proteins, thereby preventing it from binding to SCNN1A/ENAC and targeting it for degradation. Regulates store-operated Ca(+2) entry (SOCE) by stimulating ORAI1 and STIM1. Regulates KCNJ1/ROMK1 directly via its phosphorylation or indirectly via increased interaction with SLC9A3R2/NHERF2. Phosphorylates MDM2 and activates MDM2-dependent ubiquitination of p53/TP53. Phosphorylates SLC2A4/GLUT4 and up-regulates its activity. Phosphorylates APBB1/FE65 and promotes its localization to the nucleus. Phosphorylates FBXW7 and plays an inhibitory role in the NOTCH1 signaling. Phosphorylates FOXO1 resulting in its relocalization from the nucleus to the cytoplasm. Phosphorylates FOXO3, promoting its exit from the nucleus and interference with FOXO3-dependent transcription. Phosphorylates BRAF and MAP3K3/MEKK3 and inhibits their activity. Phosphorylates SLC9A3/NHE3 in response to dexamethasone, resulting in its activation and increased localization at the cell membrane. Phosphorylates CREB1. Necessary for vascular remodeling during angiogenesis. Phosphorylates MAPT/TAU and mediates microtubule depolymerization and neurite formation in hippocampal neurons. Phosphorylates MAPK1/ERK2 and activates it by enhancing its interaction with MAP2K1/MEK1 and MAP2K2/MEK2. May also play an important role in the development of particular groups of neurons in the postnatal brain. This is Serine/threonine-protein kinase Sgk1 (Sgk1) from Rattus norvegicus (Rat).